Here is a 149-residue protein sequence, read N- to C-terminus: Protein FAM72A (149 aa).

It belongs to the FAM72 family. As to quaternary structure, interacts with UNG. In terms of tissue distribution, expressed at high levels in stomach and also in kidney and, at low levels, in heart (at protein level). In the stomach, highly expressed in foveolar cells, parietal cells and chief cells (at protein level). In kidney, expressed in endothelial cells, mesangial and epithelial cells (parietal and visceral epithelium) around glomerulus (at protein level).

The protein resides in the cytoplasm. It localises to the mitochondrion. Functionally, may play a role in the regulation of cellular reactive oxygen species metabolism. May participate in cell growth regulation. In Bos taurus (Bovine), this protein is Protein FAM72A (FAM72A).